The primary structure comprises 221 residues: Translation initiation factor 6 (221 aa).

Belongs to the eIF-6 family.

In terms of biological role, binds to the 50S ribosomal subunit and prevents its association with the 30S ribosomal subunit to form the 70S initiation complex. The chain is Translation initiation factor 6 from Methanocella arvoryzae (strain DSM 22066 / NBRC 105507 / MRE50).